A 319-amino-acid chain; its full sequence is ATP-dependent 6-phosphofructokinase (319 aa).

Gly-11 contacts ATP. 21-25 contributes to the ADP binding site; sequence RAVVR. Residues 72 to 73 and 102 to 105 each bind ATP; these read RC and GDGS. Position 103 (Asp-103) interacts with Mg(2+). 125-127 is a substrate binding site; sequence TID. The active-site Proton acceptor is Asp-127. Arg-154 is an ADP binding site. Substrate-binding positions include Arg-162 and 169-171; that span reads MGR. ADP is bound by residues 185-187, Arg-211, and 213-215; these read GAE and KKH. Substrate-binding positions include Glu-222, Arg-243, and 249 to 252; that span reads HIQR.

This sequence belongs to the phosphofructokinase type A (PFKA) family. ATP-dependent PFK group I subfamily. Prokaryotic clade 'B1' sub-subfamily. Homotetramer. Mg(2+) is required as a cofactor.

Its subcellular location is the cytoplasm. The enzyme catalyses beta-D-fructose 6-phosphate + ATP = beta-D-fructose 1,6-bisphosphate + ADP + H(+). It participates in carbohydrate degradation; glycolysis; D-glyceraldehyde 3-phosphate and glycerone phosphate from D-glucose: step 3/4. With respect to regulation, allosterically activated by ADP and other diphosphonucleosides, and allosterically inhibited by phosphoenolpyruvate. Functionally, catalyzes the phosphorylation of D-fructose 6-phosphate to fructose 1,6-bisphosphate by ATP, the first committing step of glycolysis. This Bacillus pumilus (strain SAFR-032) protein is ATP-dependent 6-phosphofructokinase.